A 408-amino-acid polypeptide reads, in one-letter code: Na(+)-translocating NADH-quinone reductase subunit F (408 aa).

A helical membrane pass occupies residues 6–26 (IILGVVMFTAIVLALVAIILA). The region spanning 35–127 (GDVTIRINGE…DMDVEVPEEV (93 aa)) is the 2Fe-2S ferredoxin-type domain. [2Fe-2S] cluster contacts are provided by cysteine 70, cysteine 76, cysteine 79, and cysteine 111. In terms of domain architecture, FAD-binding FR-type spans 130 to 270 (VKAWECTVES…YGPFGEFFAK (141 aa)).

Belongs to the NqrF family. As to quaternary structure, composed of six subunits; NqrA, NqrB, NqrC, NqrD, NqrE and NqrF. The cofactor is [2Fe-2S] cluster. It depends on FAD as a cofactor.

The protein resides in the cell inner membrane. It carries out the reaction a ubiquinone + n Na(+)(in) + NADH + H(+) = a ubiquinol + n Na(+)(out) + NAD(+). Functionally, NQR complex catalyzes the reduction of ubiquinone-1 to ubiquinol by two successive reactions, coupled with the transport of Na(+) ions from the cytoplasm to the periplasm. The first step is catalyzed by NqrF, which accepts electrons from NADH and reduces ubiquinone-1 to ubisemiquinone by a one-electron transfer pathway. The protein is Na(+)-translocating NADH-quinone reductase subunit F of Marinomonas sp. (strain MWYL1).